The following is a 336-amino-acid chain: Tryptophan--tRNA ligase (336 aa).

ATP is bound by residues 11–13 (TTT) and 19–20 (GN). The 'HIGH' region signature appears at 12-20 (TTGIPHLGN). L-tryptophan is bound at residue Asp145. Residues 157–159 (GRD), Leu196, and 203–207 (KMSKS) contribute to the ATP site. The short motif at 203 to 207 (KMSKS) is the 'KMSKS' region element.

This sequence belongs to the class-I aminoacyl-tRNA synthetase family. As to quaternary structure, homodimer.

The protein resides in the cytoplasm. The catalysed reaction is tRNA(Trp) + L-tryptophan + ATP = L-tryptophyl-tRNA(Trp) + AMP + diphosphate + H(+). Functionally, catalyzes the attachment of tryptophan to tRNA(Trp). This Neisseria meningitidis serogroup A / serotype 4A (strain DSM 15465 / Z2491) protein is Tryptophan--tRNA ligase.